Here is a 996-residue protein sequence, read N- to C-terminus: MGKKQGKQLSDLKKELELDQHKIPLEELCRRLGTNTETGLTSSQAKSHLEKYGPNALTPPRTTPEWIKFCKQLFGGFQMLLWIGSILCFIAYTMEKYKNPDVLGDNLYLGLALLFVVIMTGCFAYYQDHNASKIMDSFKNLMPQFAFVIRDGKKIQLKAEEVTVGDLVEVKFGDRIPADIRITSCQSMKVDNSSLTGESEPQSRSTECTNDNPLETKNLAFFFTNTLEGTGRGIVINVGDDSVMGRIACLASSLDSGKTPIAREIEHFIHIITAMAVSLAAVFAVISFLYGYTWLEAAIFMIGIIVAKVPEGLLATVTVCLTLTAKRMAKKNCLVRNLEAVETLGSTSTICSDKTGTLTQNRMTVAHMWFDQKIVTADTTENQSGNQLYRGSKGFPELIRVASLCSRAEFKTEHAHLPVLKRDVNGDASEAAILKFAEMSTGSVMNIRSKQKKVSEIPFNSANKYQVSVHEREDKSGYFLVMKGAPERILERCSTILIDGTEIPLDNHMKECFNNAYMELGGMGERVLGFCDFELPSDQYPRGYVFDADEPNFPISGLRFVGLMSMIDPPRAAVPDAVSKCRSAGIKVIMVTGDHPITAKAIARQVGIISEGHETVDDIAARLNIPVSEVNPRSAQAAVIHGNDLKDMNSDQLDDILRHYREIVFARTSPQQKLIIVEGVQRQGEFVAVTGDGVNDSPALKKADIGVAMGIAGSDVSKQAADMILLDDNFASIVTGVEEGRLIFDNIKKSIAYTLTSKIPELSPFLMYILFDLPLAIGTVTILCIDLGTDVVPAISMAYEGPEADPRKPRDPVKEKLVNERLISMAYGQIGVMQAFGGFFTYFVIMGECGFLPNRLFGLRKWWESKAYNDLTDSYGQEWTWDARKQLEYTCHTAFFISIVIVQWTDLIICKTRRLSLFQQGMKNGTLNFALVFETCVAAFLSYTPGMDKGLRMYPLKIWWWFPPMPFSLLILVYDECRKFLMRRNPGGFLERETYY.

Transmembrane regions (helical) follow at residues 73–93 (LFGG…IAYT) and 107–123 (LYLG…TGCF). The interval 191–211 (DNSSLTGESEPQSRSTECTND) is disordered. 2 helical membrane-spanning segments follow: residues 268-290 (FIHI…SFLY) and 297-325 (AAIF…TLTA). The 4-aspartylphosphate intermediate role is filled by Asp353. Lys483 contacts ATP. Asp692 and Asp696 together coordinate Mg(2+). Helical transmembrane passes span 762 to 785 (LSPF…ILCI), 820 to 847 (ERLI…VIMG), 889 to 909 (YTCH…DLII), and 926 to 951 (TLNF…DKGL).

The protein belongs to the cation transport ATPase (P-type) (TC 3.A.3) family. Type IIC subfamily. The sodium/potassium-transporting ATPase is composed of a catalytic alpha subunit, an auxiliary non-catalytic beta subunit and an additional regulatory subunit.

It is found in the cell membrane. The catalysed reaction is K(+)(out) + Na(+)(in) + ATP + H2O = K(+)(in) + Na(+)(out) + ADP + phosphate + H(+). Functionally, this is the catalytic component of the active enzyme, which catalyzes the hydrolysis of ATP coupled with the exchange of sodium and potassium ions across the plasma membrane. This action creates the electrochemical gradient of sodium and potassium ions, providing the energy for active transport of various nutrients. The sequence is that of Sodium/potassium-transporting ATPase subunit alpha-A from Artemia franciscana (Brine shrimp).